We begin with the raw amino-acid sequence, 450 residues long: Tubulin alpha-3 chain (450 aa).

Position 11 (Q11) interacts with GTP. An N6-acetyllysine modification is found at K40. Residues E71, G144, T145, T179, N206, and N228 each coordinate GTP. Residue E71 coordinates Mg(2+). The active site involves E254.

It belongs to the tubulin family. Dimer of alpha and beta chains. A typical microtubule is a hollow water-filled tube with an outer diameter of 25 nm and an inner diameter of 15 nM. Alpha-beta heterodimers associate head-to-tail to form protofilaments running lengthwise along the microtubule wall with the beta-tubulin subunit facing the microtubule plus end conferring a structural polarity. Microtubules usually have 13 protofilaments but different protofilament numbers can be found in some organisms and specialized cells. Mg(2+) is required as a cofactor. Undergoes a tyrosination/detyrosination cycle, the cyclic removal and re-addition of a C-terminal tyrosine residue by the enzymes tubulin tyrosine carboxypeptidase (TTCP) and tubulin tyrosine ligase (TTL), respectively. In terms of processing, acetylation of alpha chains at Lys-40 stabilizes microtubules and affects affinity and processivity of microtubule motors. This modification has a role in multiple cellular functions, ranging from cell motility, cell cycle progression or cell differentiation to intracellular trafficking and signaling.

Its subcellular location is the cytoplasm. It localises to the cytoskeleton. The catalysed reaction is GTP + H2O = GDP + phosphate + H(+). Tubulin is the major constituent of microtubules, a cylinder consisting of laterally associated linear protofilaments composed of alpha- and beta-tubulin heterodimers. Microtubules grow by the addition of GTP-tubulin dimers to the microtubule end, where a stabilizing cap forms. Below the cap, tubulin dimers are in GDP-bound state, owing to GTPase activity of alpha-tubulin. This Zea mays (Maize) protein is Tubulin alpha-3 chain (TUBA3).